The sequence spans 403 residues: Basic leucine zipper 25 (403 aa).

2 disordered regions span residues 13 to 128 (SFWP…APVV) and 156 to 259 (VKPE…EFDT). Low complexity predominate over residues 24-33 (PGSSSTPSPT). Positions 56 to 69 (LSGSDSSPTTNTIE) are enriched in polar residues. Composition is skewed to low complexity over residues 115–128 (APSSDPVDSSAPVV) and 161–174 (SSASASNQKQAQGS). Over residues 175 to 195 (IVAQTSPGASSVRFSPTTSTQ) the composition is skewed to polar residues. Residues 212–226 (DSDDDDLDGDADNGD) are compositionally biased toward acidic residues. A Phosphoserine modification is found at S213. Residues 229 to 292 (DVKRARRMLS…DAAAVDNRIL (64 aa)) enclose the bZIP domain. The basic motif stretch occupies residues 231–250 (KRARRMLSNRESARRSRRRK). The short motif at 233-240 (ARRMLSNR) is the Nuclear localization signal element. Positions 264–271 (LRAEHSTL) are leucine-zipper. A compositionally biased stretch (low complexity) spans 332 to 345 (NTPSASSSIPPNSN). Disordered stretches follow at residues 332–361 (NTPSASSSIPPNSNHILKPANSSTNTSAGL) and 380–403 (EGMQNPFAPDSNLYETLPHWNHKH). Residues 351-361 (ANSSTNTSAGL) are compositionally biased toward polar residues.

It belongs to the bZIP family. Homodimer. Forms a heterodimer with BZIP1, BZIP1, BZIP2, BZIP9, BZIP11, BZIP44, BZIP53 and BZIP63. Interacts with ABI3 and forms a complex made of ABI3, BZIP53 and BZIP25. In terms of tissue distribution, expressed in roots, shoots, stems, leaves, stipulae, siliques, seeds, pollen, and flowers.

Its subcellular location is the nucleus. Its function is as follows. Transcription factor that binds to the 5'-ACGT-3' box, especially present in G-box-like motif (5'-CCACGTGGCC-3'), ABRE elements, of seed storage protein (SSP) encoding gene promoters (e.g. At2S and CRU3) and promotes their expression in seeds when in complex with ABI3 and BZIP53. This chain is Basic leucine zipper 25 (BZIP25), found in Arabidopsis thaliana (Mouse-ear cress).